Consider the following 87-residue polypeptide: MRHSSLTPRGKSWPCSAPPWPSSRTGWACLPRRCASRRRWRAGRPCSTTRTGPRFARARWIPTTGDRRGRRPQRHRPSTRREQIFSR.

2 disordered regions span residues 1–23 (MRHS…WPSS) and 61–87 (IPTT…IFSR). Basic residues predominate over residues 68–78 (RGRRPQRHRPS).

This is Putative protein KleG (kleG) from Escherichia coli.